Reading from the N-terminus, the 199-residue chain is Imidazole glycerol phosphate synthase subunit HisH 2 (199 aa).

Residues 1–199 (MIAVIDVSGN…NNFLSLESTC (199 aa)) form the Glutamine amidotransferase type-1 domain. The Nucleophile role is filled by C76. Catalysis depends on residues H177 and E179.

In terms of assembly, heterodimer of HisH and HisF.

It localises to the cytoplasm. It catalyses the reaction 5-[(5-phospho-1-deoxy-D-ribulos-1-ylimino)methylamino]-1-(5-phospho-beta-D-ribosyl)imidazole-4-carboxamide + L-glutamine = D-erythro-1-(imidazol-4-yl)glycerol 3-phosphate + 5-amino-1-(5-phospho-beta-D-ribosyl)imidazole-4-carboxamide + L-glutamate + H(+). The catalysed reaction is L-glutamine + H2O = L-glutamate + NH4(+). Its pathway is amino-acid biosynthesis; L-histidine biosynthesis; L-histidine from 5-phospho-alpha-D-ribose 1-diphosphate: step 5/9. IGPS catalyzes the conversion of PRFAR and glutamine to IGP, AICAR and glutamate. The HisH subunit provides the glutamine amidotransferase activity that produces the ammonia necessary to HisF for the synthesis of IGP and AICAR. This Legionella pneumophila subsp. pneumophila (strain Philadelphia 1 / ATCC 33152 / DSM 7513) protein is Imidazole glycerol phosphate synthase subunit HisH 2.